Here is a 1612-residue protein sequence, read N- to C-terminus: Roundabout homolog 1 (1612 aa).

An N-terminal signal peptide occupies residues 1-19 (MIAEPAHFYLFGLICLCSG). At 20–858 (SRLRQEDFPP…QQISDVVRQP (839 aa)) the chain is on the extracellular side. Ig-like C2-type domains are found at residues 29–125 (PRIV…ASLE), 131–218 (DDFR…AELT), 223–307 (PSFV…ATLT), 312–407 (PHFV…LEVT), and 416–502 (PVIR…AYIE). A disulfide bridge links Cys50 with Cys108. The N-linked (GlcNAc...) asparagine glycan is linked to Asn121. Cystine bridges form between Cys152–Cys201, Cys244–Cys291, and Cys333–Cys389. Asn424 is a glycosylation site (N-linked (GlcNAc...) asparagine). A disulfide bridge links Cys437 with Cys486. Fibronectin type-III domains follow at residues 524 to 618 (APSK…TQDV), 637 to 734 (VVLH…TLEE), and 739 to 835 (PPRS…LDSH). N-linked (GlcNAc...) asparagine glycans are attached at residues Asn751, Asn781, and Asn788. A helical membrane pass occupies residues 859 to 879 (AFIAGIGAACWIILMVFSIWL). Residues 880–1612 (YRHRKKRNGL…NNEELEETES (733 aa)) are Cytoplasmic-facing. Position 901 is a phosphoserine (Ser901). Position 909 is a phosphothreonine (Thr909). Tyr999 carries the post-translational modification Phosphotyrosine. Position 1016 is a phosphoserine (Ser1016). Tyr1034 is modified (phosphotyrosine). Residues 1045–1068 (SNNMNNGAGDSSEKHWKPPGQQKP) are disordered. Tyr1075 carries the phosphotyrosine modification. Disordered regions lie at residues 1088 to 1298 (RAND…ADME), 1313 to 1358 (EQTP…DGSF), and 1381 to 1612 (RRQM…ETES). Residues 1098 to 1107 (PYNQSYDQNT) are compositionally biased toward polar residues. Over residues 1108-1124 (GGSYNSSDRGSSTSGSQ) the composition is skewed to low complexity. A compositionally biased stretch (pro residues) spans 1147–1157 (LPPPPAHPPPH). Thr1201 carries the phosphothreonine modification. The segment covering 1216-1230 (YSHQSTATLTPSPQE) has biased composition (polar residues). Basic and acidic residues predominate over residues 1242–1254 (DLGHMPHPPDRRR). The span at 1257-1268 (VSPPPPPRPISP) shows a compositional bias: pro residues. Position 1258 is a phosphoserine (Ser1258). Acidic residues predominate over residues 1283 to 1297 (MDTDAPEEEEDEADM). Positions 1345-1358 (SSGRSSVSSSDGSF) are enriched in low complexity. The segment covering 1399-1412 (PRPTSPVSTDSNMS) has biased composition (polar residues). The span at 1420 to 1431 (RPAKKQKHQPGH) shows a compositional bias: basic residues. Residues 1441–1451 (LPPPPVPPPAI) show a composition bias toward pro residues. 2 stretches are compositionally biased toward basic and acidic residues: residues 1477 to 1502 (ARTD…RQVT) and 1510 to 1534 (DPRE…RDLP). The segment covering 1553–1562 (FPTSNNPRDP) has biased composition (polar residues). Positions 1563-1575 (SSSSSMSSRGSGS) are enriched in low complexity. Acidic residues predominate over residues 1603–1612 (NNEELEETES).

The protein belongs to the immunoglobulin superfamily. ROBO family. In terms of assembly, homodimer. Dimerization is mediated by the extracellular domain and is independent of SLIT liganding. Interacts with SLIT1 Interacts with SLIT2. Interacts with FLRT3. Interacts with MYO9B (via Rho-GAP domain). Ubiquitinated. May be deubiquitinated by USP33. In terms of tissue distribution, detected in embryonic thalamus neurons (at protein level). Expressed in embryonal spinal cord. Expressed in embryonal lung, and in adult lung bronchial epithelial cells of large proximal airways.

It localises to the cell membrane. It is found in the cell projection. The protein resides in the axon. Its subcellular location is the endoplasmic reticulum-Golgi intermediate compartment membrane. Functionally, receptor for SLIT1 and SLIT2 that mediates cellular responses to molecular guidance cues in cellular migration, including axonal navigation at the ventral midline of the neural tube and projection of axons to different regions during neuronal development. Interaction with the intracellular domain of FLRT3 mediates axon attraction towards cells expressing NTN1. In axon growth cones, the silencing of the attractive effect of NTN1 by SLIT2 may require the formation of a ROBO1-DCC complex. Plays a role in the regulation of cell migration via its interaction with MYO9B; inhibits MYO9B-mediated stimulation of RHOA GTPase activity, and thereby leads to increased levels of active, GTP-bound RHOA. May be required for lung development. The polypeptide is Roundabout homolog 1 (Robo1) (Mus musculus (Mouse)).